The sequence spans 614 residues: Vitamin B12 transporter BtuB (614 aa).

Residues 1–20 form the signal peptide; sequence MIKKATLLTAFSVTAFSAWA. The TonB box signature appears at 26–33; that stretch reads DTLVVTAN. Residues 38-152 form the TBDR plug domain; the sequence is PRSAVLAPVT…IGGVVNIITT (115 aa). Cyanocob(III)alamin contacts are provided by residues Ser-85, Asn-92, and 110–111; that span reads VS. The TBDR beta-barrel domain maps to 155–614; it reads NPGTELTAGW…EYTLSGSYTF (460 aa). The next 3 membrane-spanning stretches (beta stranded) occupy residues 158–165, 169–178, and 184–195; these read TELTAGWG, YQNYDISTQQ, and TRATLIGDYEYT. The Ca(2+) site is built by Asp-199, Gln-211, Asp-213, and Asp-215. 2 beta stranded membrane-spanning segments follow: residues 217-227 and 232-248; these read FLSKTLYGALE and DRWS…NRTD. Positions 249 and 250 each coordinate Ca(2+). Ala-251 contacts cyanocob(III)alamin. Asp-261 provides a ligand contact to Ca(2+). The next 14 membrane-spanning stretches (beta stranded) occupy residues 263-277, 279-296, 309-325, 328-337, 353-369, 371-381, 385-400, 403-417, 434-443, 449-458, 473-490, 494-509, 517-529, and 535-550; these read RKLY…LRFN, ERIQ…KDYN, TLDE…NSVV, HGNVGAGVDW, YDQR…QQLG, FTLEAAARSDD, FGRH…WEFI, YRFI…KAPN, KSKQWEGAFE, VSWRISGYRN, YYNE…TANF, PLTH…ARNA, RRSK…QLDW, and DWGV…YDSD. Residue Thr-309 coordinates cyanocob(III)alamin. Arg-517 provides a ligand contact to cyanocob(III)alamin. Tyr-551 is a cyanocob(III)alamin binding site. 3 beta stranded membrane-spanning segments follow: residues 558 to 572, 585 to 596, and 602 to 614; these read TVKM…LTVA, IANLFDKDYETV, and AGRE…SYTF. The TonB C-terminal box motif lies at 597 to 614; sequence YGYQTAGREYTLSGSYTF.

This sequence belongs to the TonB-dependent receptor family. BtuB (TC 1.B.14.3.1) subfamily.

It localises to the cell outer membrane. Functionally, involved in the active translocation of vitamin B12 (cyanocobalamin) across the outer membrane to the periplasmic space. It derives its energy for transport by interacting with the trans-periplasmic membrane protein TonB. The sequence is that of Vitamin B12 transporter BtuB from Salmonella choleraesuis (strain SC-B67).